A 360-amino-acid polypeptide reads, in one-letter code: Phosphoserine aminotransferase (360 aa).

Arg-41 serves as a coordination point for L-glutamate. Trp-101, Thr-152, Asp-172, and Gln-195 together coordinate pyridoxal 5'-phosphate. Lys-196 bears the N6-(pyridoxal phosphate)lysine mark. Residue 237 to 238 (NT) participates in pyridoxal 5'-phosphate binding.

It belongs to the class-V pyridoxal-phosphate-dependent aminotransferase family. SerC subfamily. As to quaternary structure, homodimer. The cofactor is pyridoxal 5'-phosphate.

The protein resides in the cytoplasm. It carries out the reaction O-phospho-L-serine + 2-oxoglutarate = 3-phosphooxypyruvate + L-glutamate. The enzyme catalyses 4-(phosphooxy)-L-threonine + 2-oxoglutarate = (R)-3-hydroxy-2-oxo-4-phosphooxybutanoate + L-glutamate. Its pathway is amino-acid biosynthesis; L-serine biosynthesis; L-serine from 3-phospho-D-glycerate: step 2/3. It participates in cofactor biosynthesis; pyridoxine 5'-phosphate biosynthesis; pyridoxine 5'-phosphate from D-erythrose 4-phosphate: step 3/5. Catalyzes the reversible conversion of 3-phosphohydroxypyruvate to phosphoserine and of 3-hydroxy-2-oxo-4-phosphonooxybutanoate to phosphohydroxythreonine. This Burkholderia lata (strain ATCC 17760 / DSM 23089 / LMG 22485 / NCIMB 9086 / R18194 / 383) protein is Phosphoserine aminotransferase.